The chain runs to 79 residues: MORN repeat-containing protein 2 (79 aa).

2 MORN repeats span residues 15–36 (YEGQ…PNGA) and 38–55 (YTGN…EYTD).

The protein localises to the cytoplasmic vesicle. Its subcellular location is the secretory vesicle. The protein resides in the acrosome. It localises to the nucleus. Functionally, might have a role in spermatogenesis. The sequence is that of MORN repeat-containing protein 2 from Homo sapiens (Human).